The sequence spans 404 residues: Cysteine desulfurase IscS (404 aa).

Pyridoxal 5'-phosphate is bound by residues 75–76 (AT), Asn-155, Gln-183, and 203–205 (SGH). Lys-206 carries the post-translational modification N6-(pyridoxal phosphate)lysine. Residue Thr-243 participates in pyridoxal 5'-phosphate binding. The Cysteine persulfide intermediate role is filled by Cys-328. Cys-328 lines the [2Fe-2S] cluster pocket.

The protein belongs to the class-V pyridoxal-phosphate-dependent aminotransferase family. NifS/IscS subfamily. In terms of assembly, homodimer. Forms a heterotetramer with IscU, interacts with other sulfur acceptors. The cofactor is pyridoxal 5'-phosphate.

Its subcellular location is the cytoplasm. It carries out the reaction (sulfur carrier)-H + L-cysteine = (sulfur carrier)-SH + L-alanine. It functions in the pathway cofactor biosynthesis; iron-sulfur cluster biosynthesis. Master enzyme that delivers sulfur to a number of partners involved in Fe-S cluster assembly, tRNA modification or cofactor biosynthesis. Catalyzes the removal of elemental sulfur and selenium atoms from cysteine and selenocysteine to produce alanine. Functions as a sulfur delivery protein for Fe-S cluster synthesis onto IscU, an Fe-S scaffold assembly protein, as well as other S acceptor proteins. Also functions as a selenium delivery protein in the pathway for the biosynthesis of selenophosphate. The chain is Cysteine desulfurase IscS from Salmonella typhi.